The chain runs to 94 residues: Ribonuclease VapC3 (94 aa).

Aspartate 6 is a binding site for Mg(2+).

The protein belongs to the PINc/VapC protein family. Mg(2+) serves as cofactor.

Toxic component of a type II toxin-antitoxin (TA) system. An RNase. Its cognate antitoxin is VapB3. The sequence is that of Ribonuclease VapC3 (vapC3) from Methanocaldococcus jannaschii (strain ATCC 43067 / DSM 2661 / JAL-1 / JCM 10045 / NBRC 100440) (Methanococcus jannaschii).